Consider the following 618-residue polypeptide: Proline--tRNA ligase (618 aa).

This sequence belongs to the class-II aminoacyl-tRNA synthetase family. ProS type 1 subfamily. Homodimer.

The protein localises to the cytoplasm. The enzyme catalyses tRNA(Pro) + L-proline + ATP = L-prolyl-tRNA(Pro) + AMP + diphosphate. In terms of biological role, catalyzes the attachment of proline to tRNA(Pro) in a two-step reaction: proline is first activated by ATP to form Pro-AMP and then transferred to the acceptor end of tRNA(Pro). As ProRS can inadvertently accommodate and process non-cognate amino acids such as alanine and cysteine, to avoid such errors it has two additional distinct editing activities against alanine. One activity is designated as 'pretransfer' editing and involves the tRNA(Pro)-independent hydrolysis of activated Ala-AMP. The other activity is designated 'posttransfer' editing and involves deacylation of mischarged Ala-tRNA(Pro). The misacylated Cys-tRNA(Pro) is not edited by ProRS. The chain is Proline--tRNA ligase from Streptococcus equi subsp. equi (strain 4047).